The following is a 297-amino-acid chain: Phosphoribosylaminoimidazole-succinocarboxamide synthase (297 aa).

This sequence belongs to the SAICAR synthetase family.

It carries out the reaction 5-amino-1-(5-phospho-D-ribosyl)imidazole-4-carboxylate + L-aspartate + ATP = (2S)-2-[5-amino-1-(5-phospho-beta-D-ribosyl)imidazole-4-carboxamido]succinate + ADP + phosphate + 2 H(+). The protein operates within purine metabolism; IMP biosynthesis via de novo pathway; 5-amino-1-(5-phospho-D-ribosyl)imidazole-4-carboxamide from 5-amino-1-(5-phospho-D-ribosyl)imidazole-4-carboxylate: step 1/2. This chain is Phosphoribosylaminoimidazole-succinocarboxamide synthase, found in Corynebacterium diphtheriae (strain ATCC 700971 / NCTC 13129 / Biotype gravis).